The sequence spans 532 residues: 56 kDa type-specific antigen (532 aa).

An N-terminal signal peptide occupies residues 1–22 (MKKIMLIASAMSALSLPFSASA). The helical transmembrane segment at 67–87 (LTTGLPFGGTLAAGMTIAPGF) threads the bilayer. Disordered stretches follow at residues 113–140 (KGEIKADSGGGTDAPIRKPFKLTPPQPT) and 400–426 (QQEEDAKNQGKGDCKQQQGASEKSKEG). Positions 403–413 (EDAKNQGKGDC) are enriched in basic and acidic residues. The chain crosses the membrane as a helical span at residues 480-500 (TGMVASGALGVAINAAEGVCV).

The protein resides in the cell membrane. Functionally, may be an adherent factor for rickettsial adsorption to the host-cell surface and a determinant of virulence of individual rickettsial strain. It is the major outer membrane protein. This chain is 56 kDa type-specific antigen, found in Orientia tsutsugamushi (Rickettsia tsutsugamushi).